Reading from the N-terminus, the 480-residue chain is Heparin cofactor 2 (480 aa).

Residues Met-1–Gly-19 form the signal peptide. An N-linked (GlcNAc...) asparagine glycan is attached at Asn-32. Repeat copies occupy residues Gly-56–Glu-66 and Ser-70–Asp-80. The segment at Gly-56–Asp-80 is 2 X 11 AA approximate repeats, Asp/Glu-rich (acidic) (hirudin-like). 2 positions are modified to sulfotyrosine: Tyr-62 and Tyr-75. N-linked (GlcNAc...) asparagine glycosylation is present at Asn-169. The interval Lys-173–Arg-193 is glycosaminoglycan-binding site. N-linked (GlcNAc...) asparagine glycans are attached at residues Asn-368 and Asn-404.

The protein belongs to the serpin family. Post-translationally, N-glycosylated; different glycan composition appears to lead to two forms of this protein (56 and 60 kDa).

In terms of biological role, thrombin inhibitor activated by the glycosaminoglycans, heparin or dermatan sulfate. In the presence of the latter, HC-II becomes the predominant thrombin inhibitor in place of antithrombin III (AT). This is Heparin cofactor 2 (SERPIND1) from Oryctolagus cuniculus (Rabbit).